A 142-amino-acid polypeptide reads, in one-letter code: Spliceosomal protein DIB1 (142 aa).

The protein belongs to the DIM1 family. As to quaternary structure, component of the 25S [U4/U6.U5] tri-snRNP.

It is found in the nucleus. Essential role in pre-mRNA splicing. Also essential for entry into mitosis (G2/M progression) as well as for chromosome segregation during mitosis. In Candida glabrata (strain ATCC 2001 / BCRC 20586 / JCM 3761 / NBRC 0622 / NRRL Y-65 / CBS 138) (Yeast), this protein is Spliceosomal protein DIB1 (DIB1).